The following is a 1097-amino-acid chain: DNA-directed RNA polymerase subunit beta (1097 aa).

Residues 1072 to 1097 are disordered; it reads QDINPRRNTPSRPTYESLGTSEYEED. Positions 1077-1091 are enriched in polar residues; the sequence is RRNTPSRPTYESLGT.

The protein belongs to the RNA polymerase beta chain family. In terms of assembly, in cyanobacteria the RNAP catalytic core is composed of 2 alpha, 1 beta, 1 beta', 1 gamma and 1 omega subunit. When a sigma factor is associated with the core the holoenzyme is formed, which can initiate transcription.

It catalyses the reaction RNA(n) + a ribonucleoside 5'-triphosphate = RNA(n+1) + diphosphate. In terms of biological role, DNA-dependent RNA polymerase catalyzes the transcription of DNA into RNA using the four ribonucleoside triphosphates as substrates. The protein is DNA-directed RNA polymerase subunit beta of Prochlorococcus marinus (strain AS9601).